The primary structure comprises 113 residues: T cell receptor alpha variable 12-2 (113 aa).

An N-terminal signal peptide occupies residues 1–20 (MKSLRVLLVILWLQLSWVWS). The 91-residue stretch at 23 to 113 (KEVEQNSGPL…DSATYLCAVN (91 aa)) folds into the Ig-like domain. Asparagine 43 carries N-linked (GlcNAc...) asparagine glycosylation. Cysteine 44 and cysteine 110 form a disulfide bridge.

As to quaternary structure, alpha-beta TR is a heterodimer composed of an alpha and beta chain; disulfide-linked. The alpha-beta TR is associated with the transmembrane signaling CD3 coreceptor proteins to form the TR-CD3 (TcR or TCR). The assembly of alpha-beta TR heterodimers with CD3 occurs in the endoplasmic reticulum where a single alpha-beta TR heterodimer associates with one CD3D-CD3E heterodimer, one CD3G-CD3E heterodimer and one CD247 homodimer forming a stable octameric structure. CD3D-CD3E and CD3G-CD3E heterodimers preferentially associate with TR alpha and TR beta chains, respectively. The association of the CD247 homodimer is the last step of TcR assembly in the endoplasmic reticulum and is required for transport to the cell surface.

The protein resides in the cell membrane. Its function is as follows. V region of the variable domain of T cell receptor (TR) alpha chain that participates in the antigen recognition. Alpha-beta T cell receptors are antigen specific receptors which are essential to the immune response and are present on the cell surface of T lymphocytes. Recognize peptide-major histocompatibility (MH) (pMH) complexes that are displayed by antigen presenting cells (APC), a prerequisite for efficient T cell adaptive immunity against pathogens. Binding of alpha-beta TR to pMH complex initiates TR-CD3 clustering on the cell surface and intracellular activation of LCK that phosphorylates the ITAM motifs of CD3G, CD3D, CD3E and CD247 enabling the recruitment of ZAP70. In turn ZAP70 phosphorylates LAT, which recruits numerous signaling molecules to form the LAT signalosome. The LAT signalosome propagates signal branching to three major signaling pathways, the calcium, the mitogen-activated protein kinase (MAPK) kinase and the nuclear factor NF-kappa-B (NF-kB) pathways, leading to the mobilization of transcription factors that are critical for gene expression and essential for T cell growth and differentiation. The T cell repertoire is generated in the thymus, by V-(D)-J rearrangement. This repertoire is then shaped by intrathymic selection events to generate a peripheral T cell pool of self-MH restricted, non-autoaggressive T cells. Post-thymic interaction of alpha-beta TR with the pMH complexes shapes TR structural and functional avidity. This Homo sapiens (Human) protein is T cell receptor alpha variable 12-2.